A 69-amino-acid chain; its full sequence is ATP synthase F(0) complex subunit e, mitochondrial (69 aa).

An N6-acetyllysine modification is found at Lys-34.

It belongs to the ATPase e subunit family. As to quaternary structure, component of the ATP synthase complex composed at least of ATP5F1A/subunit alpha, ATP5F1B/subunit beta, ATP5MC1/subunit c (homooctomer), MT-ATP6/subunit a, MT-ATP8/subunit 8, ATP5ME/subunit e, ATP5MF/subunit f, ATP5MG/subunit g, ATP5MK/subunit k, ATP5MJ/subunit j, ATP5F1C/subunit gamma, ATP5F1D/subunit delta, ATP5F1E/subunit epsilon, ATP5PF/subunit F6, ATP5PB/subunit b, ATP5PD/subunit d, ATP5PO/subunit OSCP. ATP synthase complex consists of a soluble F(1) head domain (subunits alpha(3) and beta(3)) - the catalytic core - and a membrane F(0) domain - the membrane proton channel (subunits c, a, 8, e, f, g, k and j). These two domains are linked by a central stalk (subunits gamma, delta, and epsilon) rotating inside the F1 region and a stationary peripheral stalk (subunits F6, b, d, and OSCP).

The protein resides in the mitochondrion. The protein localises to the mitochondrion inner membrane. Subunit e, of the mitochondrial membrane ATP synthase complex (F(1)F(0) ATP synthase or Complex V) that produces ATP from ADP in the presence of a proton gradient across the membrane which is generated by electron transport complexes of the respiratory chain. ATP synthase complex consist of a soluble F(1) head domain - the catalytic core - and a membrane F(1) domain - the membrane proton channel. These two domains are linked by a central stalk rotating inside the F(1) region and a stationary peripheral stalk. During catalysis, ATP synthesis in the catalytic domain of F(1) is coupled via a rotary mechanism of the central stalk subunits to proton translocation. In vivo, can only synthesize ATP although its ATP hydrolase activity can be activated artificially in vitro. Part of the complex F(0) domain. The polypeptide is ATP synthase F(0) complex subunit e, mitochondrial (Cricetulus longicaudatus (Long-tailed dwarf hamster)).